The sequence spans 395 residues: ATP phosphoribosyltransferase regulatory subunit (395 aa).

This sequence belongs to the class-II aminoacyl-tRNA synthetase family. HisZ subfamily. In terms of assembly, heteromultimer composed of HisG and HisZ subunits.

The protein resides in the cytoplasm. The protein operates within amino-acid biosynthesis; L-histidine biosynthesis; L-histidine from 5-phospho-alpha-D-ribose 1-diphosphate: step 1/9. Required for the first step of histidine biosynthesis. May allow the feedback regulation of ATP phosphoribosyltransferase activity by histidine. The sequence is that of ATP phosphoribosyltransferase regulatory subunit from Pseudomonas syringae pv. tomato (strain ATCC BAA-871 / DC3000).